The following is a 151-amino-acid chain: 3-hydroxyacyl-[acyl-carrier-protein] dehydratase FabZ (151 aa).

The active site involves H49.

It belongs to the thioester dehydratase family. FabZ subfamily.

It localises to the cytoplasm. It catalyses the reaction a (3R)-hydroxyacyl-[ACP] = a (2E)-enoyl-[ACP] + H2O. Involved in unsaturated fatty acids biosynthesis. Catalyzes the dehydration of short chain beta-hydroxyacyl-ACPs and long chain saturated and unsaturated beta-hydroxyacyl-ACPs. This Bordetella parapertussis (strain 12822 / ATCC BAA-587 / NCTC 13253) protein is 3-hydroxyacyl-[acyl-carrier-protein] dehydratase FabZ.